A 253-amino-acid polypeptide reads, in one-letter code: Transmembrane protein 51 (253 aa).

The next 2 helical transmembrane spans lie at 17–37 (IGLGMLVLGVIMAMWNLVPGF) and 65–85 (VAYVLVGAGVMLLLLSICLSI). Disordered regions lie at residues 93–133 (QGED…YVPS) and 164–253 (LTGL…RPPD). Residues 113 to 124 (EDSQEEEEEDEE) are compositionally biased toward acidic residues. A Phosphoserine modification is found at Ser115. The segment covering 164–176 (LTGLDETTPTSTR) has biased composition (polar residues). Residues Ser182 and Ser192 each carry the phosphoserine modification. A compositionally biased stretch (basic residues) spans 194-205 (LAKRLKPLKVRR). Positions 206-217 (IKSEKLHLKDFR) are enriched in basic and acidic residues. The span at 224–238 (NVPPPSIEPLTPPPQ) shows a compositional bias: pro residues. The segment covering 242–253 (VQEKAPDTRPPD) has biased composition (basic and acidic residues).

The protein localises to the membrane. The sequence is that of Transmembrane protein 51 (TMEM51) from Homo sapiens (Human).